A 523-amino-acid polypeptide reads, in one-letter code: Lysine-specific demethylase 4D (523 aa).

The region spanning 18 to 60 (IMIFHPTKEEFNDFDKYIAYMESQGAHRAGLAKIIPPKEWKAR) is the JmjN domain. 2 positions are modified to polyADP-ribosyl glutamic acid: E26 and E27. Residue Y136 participates in 2-oxoglutarate binding. Residues 146–312 (DENTKQWNLG…YGKMASQCSC (167 aa)) form the JmjC domain. The Fe cation site is built by H192 and E194. N202 and K210 together coordinate 2-oxoglutarate. The Zn(2+) site is built by C238 and H244. Position 245 (K245) interacts with 2-oxoglutarate. Fe cation is bound at residue H280. The Zn(2+) site is built by C310 and C312. The segment at 407–523 (RRSAVSGTAT…ASGCSWAPVP (117 aa)) is disordered. The span at 428–440 (KPSSTPSSTPGPS) shows a compositional bias: low complexity. Basic residues predominate over residues 448–458 (NGRRGRGRPPQ).

This sequence belongs to the JHDM3 histone demethylase family. The cofactor is Fe(2+). Post-translationally, ubiquitinated via 'Lys-63'-linked ubiquitin chains. Deubiquitinated by USP14 with the help of TRIM14 leading to stabilization.

Its subcellular location is the nucleus. The enzyme catalyses N(6),N(6),N(6)-trimethyl-L-lysyl(9)-[histone H3] + 2 2-oxoglutarate + 2 O2 = N(6)-methyl-L-lysyl(9)-[histone H3] + 2 formaldehyde + 2 succinate + 2 CO2. Functionally, histone demethylase that specifically demethylates 'Lys-9' of histone H3, thereby playing a central role in histone code. Does not demethylate histone H3 'Lys-4', H3 'Lys-27', H3 'Lys-36' nor H4 'Lys-20'. Demethylates both di- and trimethylated H3 'Lys-9' residue, while it has no activity on monomethylated residues. Demethylation of Lys residue generates formaldehyde and succinate. The chain is Lysine-specific demethylase 4D (KDM4D) from Homo sapiens (Human).